Consider the following 119-residue polypeptide: DNA-binding protein MMP0157 (119 aa).

Residues 1 to 12 show a composition bias toward basic and acidic residues; it reads MNPEEIRQRRLQ. The tract at residues 1–35 is disordered; the sequence is MNPEEIRQRRLQEMQAKAQAQGAANDPEAQRQMQE.

The protein belongs to the PDCD5 family.

The sequence is that of DNA-binding protein MMP0157 from Methanococcus maripaludis (strain DSM 14266 / JCM 13030 / NBRC 101832 / S2 / LL).